A 204-amino-acid polypeptide reads, in one-letter code: MATASPSVFLLMVNGQVESAQFPEYDDLYCKYCFVYGQDWAPTAGLEEGISQITSKSQDVRQALVWNFPIDVTFKSTNPYGWPQIVLSVYGPDVFGNDVVRGYGAVHVPFSPGRHKRTIPMFVPESTSKLQKFTSWFMGRRPEYTDPKVVAQGEGREVTRVRSQGFVTLLFNVVTKDMRKLGYDTGPSDTQGVLGPSPPQSFPQ.

In terms of domain architecture, C2 B9-type spans 9-127; sequence FLLMVNGQVE…TIPMFVPEST (119 aa). The interval 182–204 is disordered; sequence GYDTGPSDTQGVLGPSPPQSFPQ.

This sequence belongs to the B9D family. Part of the tectonic-like complex (also named B9 complex).

It localises to the cytoplasm. Its subcellular location is the cytoskeleton. It is found in the cilium basal body. The protein localises to the cilium axoneme. Component of the tectonic-like complex, a complex localized at the transition zone of primary cilia and acting as a barrier that prevents diffusion of transmembrane proteins between the cilia and plasma membranes. Required for ciliogenesis and sonic hedgehog/SHH signaling. This is B9 domain-containing protein 1 (B9D1) from Homo sapiens (Human).